The chain runs to 491 residues: Rab5 GDP/GTP exchange factor (491 aa).

The interval 1 to 74 (MSLKSERRGI…EEEAFASSQS (74 aa)) is interaction with ubiquitinated proteins. An A20-type zinc finger spans residues 13 to 47 (DQSDLLCKKGCGYYGNPAWQGFCSKCWREEYHKAR). Zn(2+) contacts are provided by Cys19, Cys23, Cys35, and Cys38. The disordered stretch occupies residues 66-85 (EEAFASSQSSQGAQSLTFSK). A compositionally biased stretch (low complexity) spans 69 to 84 (FASSQSSQGAQSLTFS). 2 positions are modified to phosphoserine: Ser124 and Ser132. Lys151 and Lys170 each carry N6-acetyllysine. The VPS9 domain occupies 232–375 (EKKDLAIQKR…IEKLDAQSLN (144 aa)). A phosphoserine mark is found at Ser373, Ser377, Ser390, and Ser400. The tract at residues 462 to 491 (PPNQPLAAIDSENVENDKLPPPLQPQVYAG) is disordered.

As to quaternary structure, interacts with RGS14; the interaction is GTP-dependent. Heterodimer with RABEP1. The heterodimer binds RAB4A and RAB5A that have been activated by GTP-binding. Interacts with RAB21, and with 100-fold lower affinity also with RAB22. Binds TSC2, GGA1, GGA2, GGA3, AP1G1 and AP1G2. Interacts with ubiquitinated EGFR. In terms of processing, monoubiquitinated.

The protein resides in the cytoplasm. It is found in the early endosome. It localises to the recycling endosome. Rab effector protein acting as linker between gamma-adaptin, RAB4A or RAB5A. Involved in endocytic membrane fusion and membrane trafficking of recycling endosomes. Stimulates nucleotide exchange on RAB5A. Can act as a ubiquitin ligase. The polypeptide is Rab5 GDP/GTP exchange factor (RABGEF1) (Homo sapiens (Human)).